Here is a 283-residue protein sequence, read N- to C-terminus: Elongation factor Ts (283 aa).

Positions 80–83 are involved in Mg(2+) ion dislocation from EF-Tu; sequence TDFV.

Belongs to the EF-Ts family.

Its subcellular location is the cytoplasm. Functionally, associates with the EF-Tu.GDP complex and induces the exchange of GDP to GTP. It remains bound to the aminoacyl-tRNA.EF-Tu.GTP complex up to the GTP hydrolysis stage on the ribosome. In Serratia proteamaculans (strain 568), this protein is Elongation factor Ts.